The chain runs to 181 residues: Proteinase inhibitor A (181 aa).

Residues 1 to 24 (MAASNALLLISGVLLISLAVLCHG) form the signal peptide. 3 disulfide bridges follow: C67-C113, C134-C143, and C136-C139.

This sequence belongs to the protease inhibitor I3 (leguminous Kunitz-type inhibitor) family.

The protein resides in the secreted. In terms of biological role, possesses two reactive sites. Inhibits an equimolar amount of trypsin and chymotrypsin simultaneously, and inhibits kallikrein weakly. The chain is Proteinase inhibitor A from Sagittaria sagittifolia (Arrowhead).